The following is a 162-amino-acid chain: Small ribosomal subunit protein uS9 (162 aa).

The protein belongs to the universal ribosomal protein uS9 family.

The chain is Small ribosomal subunit protein uS9 from Methylobacterium sp. (strain 4-46).